The following is a 447-amino-acid chain: Probable tRNA methyltransferase 9B (447 aa).

Residue Ser212 is modified to Phosphoserine. Disordered regions lie at residues 274-306 (AWAN…PNLD) and 320-348 (WLRT…NFLD). Polar residues predominate over residues 276–286 (ANSTVSQQPSR).

It belongs to the methyltransferase superfamily.

Its function is as follows. May modify wobble uridines in specific arginine and glutamic acid tRNAs. Acts as a tumor suppressor by promoting the expression of LIN9. This Mus musculus (Mouse) protein is Probable tRNA methyltransferase 9B (Trmt9b).